Reading from the N-terminus, the 29-residue chain is NAD(P)H-quinone oxidoreductase subunit 5, chloroplastic (29 aa).

The chain crosses the membrane as a helical span at residues Ser-1 to Ser-15.

It belongs to the complex I subunit 5 family. In terms of assembly, NDH is composed of at least 16 different subunits, 5 of which are encoded in the nucleus.

Its subcellular location is the plastid. The protein localises to the chloroplast thylakoid membrane. The catalysed reaction is a plastoquinone + NADH + (n+1) H(+)(in) = a plastoquinol + NAD(+) + n H(+)(out). It carries out the reaction a plastoquinone + NADPH + (n+1) H(+)(in) = a plastoquinol + NADP(+) + n H(+)(out). NDH shuttles electrons from NAD(P)H:plastoquinone, via FMN and iron-sulfur (Fe-S) centers, to quinones in the photosynthetic chain and possibly in a chloroplast respiratory chain. The immediate electron acceptor for the enzyme in this species is believed to be plastoquinone. Couples the redox reaction to proton translocation, and thus conserves the redox energy in a proton gradient. The protein is NAD(P)H-quinone oxidoreductase subunit 5, chloroplastic of Pseudotsuga menziesii (Douglas-fir).